Consider the following 455-residue polypeptide: Protein king tubby (455 aa).

The tract at residues 35 to 92 is disordered; sequence RPMSGMRGNSRELHAYDGPMQFIGSPHNPDQILSNNSSSVHLSSSMNSSRNNSNNLRS. Low complexity predominate over residues 67–92; the sequence is LSNNSSSVHLSSSMNSSRNNSNNLRS. The residue at position 144 (S144) is a Phosphoserine.

This sequence belongs to the TUB family.

The protein resides in the cytoplasm. It localises to the nucleus. Its subcellular location is the cell projection. It is found in the cilium membrane. The protein localises to the rhabdomere. This is Protein king tubby from Drosophila virilis (Fruit fly).